The chain runs to 575 residues: Isocitrate dehydrogenase kinase/phosphatase (575 aa).

Residues 315–321 (APGVKGM) and K336 each bind ATP. Residue D371 is part of the active site.

The protein belongs to the AceK family.

It localises to the cytoplasm. The catalysed reaction is L-seryl-[isocitrate dehydrogenase] + ATP = O-phospho-L-seryl-[isocitrate dehydrogenase] + ADP + H(+). Bifunctional enzyme which can phosphorylate or dephosphorylate isocitrate dehydrogenase (IDH) on a specific serine residue. This is a regulatory mechanism which enables bacteria to bypass the Krebs cycle via the glyoxylate shunt in response to the source of carbon. When bacteria are grown on glucose, IDH is fully active and unphosphorylated, but when grown on acetate or ethanol, the activity of IDH declines drastically concomitant with its phosphorylation. This chain is Isocitrate dehydrogenase kinase/phosphatase, found in Yersinia pseudotuberculosis serotype I (strain IP32953).